Consider the following 681-residue polypeptide: UvrABC system protein B (681 aa).

The region spanning 30-419 is the Helicase ATP-binding domain; that stretch reads QGVRDGRHWQ…GEVVELLVRP (390 aa). 43–50 provides a ligand contact to ATP; it reads GVTGSGKT. Positions 96 to 119 match the Beta-hairpin motif; sequence YYDFYQPEAYLPSLDKYIAKDLRI. Residues 435 to 601 enclose the Helicase C-terminal domain; it reads QIDNLLAEIR…SIVKSVDQIL (167 aa). The region spanning 641–676 is the UVR domain; sequence YAIVEGLRLEMQEAAEHMEYEKAAYLRDEITKMEQV.

Belongs to the UvrB family. In terms of assembly, forms a heterotetramer with UvrA during the search for lesions. Interacts with UvrC in an incision complex.

The protein resides in the cytoplasm. The UvrABC repair system catalyzes the recognition and processing of DNA lesions. A damage recognition complex composed of 2 UvrA and 2 UvrB subunits scans DNA for abnormalities. Upon binding of the UvrA(2)B(2) complex to a putative damaged site, the DNA wraps around one UvrB monomer. DNA wrap is dependent on ATP binding by UvrB and probably causes local melting of the DNA helix, facilitating insertion of UvrB beta-hairpin between the DNA strands. Then UvrB probes one DNA strand for the presence of a lesion. If a lesion is found the UvrA subunits dissociate and the UvrB-DNA preincision complex is formed. This complex is subsequently bound by UvrC and the second UvrB is released. If no lesion is found, the DNA wraps around the other UvrB subunit that will check the other stand for damage. The chain is UvrABC system protein B from Chlorobium chlorochromatii (strain CaD3).